The chain runs to 323 residues: Calcium homeostasis modulator protein 2 (323 aa).

The Cytoplasmic portion of the chain corresponds to 1 to 21; sequence MAALIAENFRFLSLFFKSKDV. The tract at residues 14 to 39 is central pore; the sequence is LFFKSKDVMIFNGLVALGTVGSQELF. A helical membrane pass occupies residues 22-43; the sequence is MIFNGLVALGTVGSQELFSVVA. The Extracellular segment spans residues 44–52; sequence FHCPCSPAR. Cystine bridges form between cysteine 46–cysteine 130 and cysteine 48–cysteine 162. Residues 53-76 traverse the membrane as a helical segment; sequence NYLYGLAAIGVPALVLFIIGIILN. Residues 77 to 101 are Cytoplasmic-facing; that stretch reads NHTWNLVAECQHRRTKNCSAAPTFL. Residues 102-132 traverse the membrane as a helical segment; sequence LLSSILGRAAVAPVTWSVISLLRGEAYVCAL. The Extracellular segment spans residues 133–179; the sequence is SEFVDPSSLTAREEHFPSAHATEILARFPCKENPDNLSDFREEVSRR. Residues 145 to 152 form a hemichannel docking region; it reads EEHFPSAH. A helical transmembrane segment spans residues 180–206; that stretch reads LRYESQLFGWLLIGVVAILVFLTKCLK. Residues 207–323 are Cytoplasmic-facing; the sequence is HYCSPLSYRQ…DNVEMALLPS (117 aa). The segment at 214-251 is intersubunit interaction; the sequence is YRQEAYWAQYRANEDQLFQRTAEVHSRVLAANNVRRFF.

It belongs to the CALHM family. As to quaternary structure, homo-undecamer. Two undecameric hemichannels can assemble in a head-to-head manner to form a gap junction. In terms of tissue distribution, placenta.

The protein localises to the cell membrane. The catalysed reaction is ATP(in) = ATP(out). Its activity is regulated as follows. Inhibited by Ca(2+) and ruthenium red in a voltage-dependent way. Pore-forming subunit of Ca(2+) homeostasis modulator channels. Mediates ATP release from astrocytes and ATP-induced Ca(2+) influx in microglia thus regulating neuronal ATP and Ca(2+) homeostasis, synaptic transmission and neuroinflammatory response. May form intercellular gap junctions. The gating mechanism remains unknown. The chain is Calcium homeostasis modulator protein 2 from Homo sapiens (Human).